The chain runs to 892 residues: DNA mismatch repair protein MutS (892 aa).

The tract at residues T663–M684 is disordered. Residue G696–S703 participates in ATP binding.

It belongs to the DNA mismatch repair MutS family.

Its function is as follows. This protein is involved in the repair of mismatches in DNA. It is possible that it carries out the mismatch recognition step. This protein has a weak ATPase activity. This Nostoc punctiforme (strain ATCC 29133 / PCC 73102) protein is DNA mismatch repair protein MutS.